A 740-amino-acid chain; its full sequence is Copalyl diphosphate synthase 2 (740 aa).

Residue Lys154 participates in substrate binding. Mg(2+) contacts are provided by Asp287 and Asp289. The DXDD motif motif lies at 287–290 (DADD). Position 373 (Lys373) interacts with substrate.

The protein belongs to the terpene synthase family. The cofactor is Mg(2+).

It catalyses the reaction (2E,6E,10E)-geranylgeranyl diphosphate = (+)-copalyl diphosphate. Its pathway is secondary metabolite biosynthesis; terpenoid biosynthesis. Monofunctional diterpene synthase converting geranylgeranyl diphosphate to copalyl diphosphate. The chain is Copalyl diphosphate synthase 2 (CPS2) from Selaginella moellendorffii (Spikemoss).